The following is a 341-amino-acid chain: Mediator of RNA polymerase II transcription subunit 18 (341 aa).

A disordered region spans residues 139 to 216; that stretch reads KVMDKEKVQS…KEHSEGNASQ (78 aa). Residues 163–211 show a composition bias toward basic and acidic residues; it reads EDKKENIKKEESGEEVKGSGEEVKGSGEEVKGSGEEAKKSGEEAKEHSE.

It belongs to the Mediator complex subunit 18 family. As to quaternary structure, component of the Mediator complex.

It localises to the nucleus. Its function is as follows. Component of the Mediator complex, a coactivator involved in the regulated transcription of nearly all RNA polymerase II-dependent genes. Mediator functions as a bridge to convey information from gene-specific regulatory proteins to the basal RNA polymerase II transcription machinery. Mediator is recruited to promoters by direct interactions with regulatory proteins and serves as a scaffold for the assembly of a functional preinitiation complex with RNA polymerase II and the general transcription factors. This chain is Mediator of RNA polymerase II transcription subunit 18 (SRB5), found in Debaryomyces hansenii (strain ATCC 36239 / CBS 767 / BCRC 21394 / JCM 1990 / NBRC 0083 / IGC 2968) (Yeast).